The chain runs to 109 residues: Cell division protein ZapA (109 aa).

Positions 21–99 (PDQRDALNQA…IEQALLEQGR (79 aa)) form a coiled coil.

It belongs to the ZapA family. Type 1 subfamily. Homodimer. Interacts with FtsZ.

The protein resides in the cytoplasm. Functionally, activator of cell division through the inhibition of FtsZ GTPase activity, therefore promoting FtsZ assembly into bundles of protofilaments necessary for the formation of the division Z ring. It is recruited early at mid-cell but it is not essential for cell division. This is Cell division protein ZapA from Shigella boydii serotype 18 (strain CDC 3083-94 / BS512).